Reading from the N-terminus, the 271-residue chain is Repressed by EFG1 protein 1 (271 aa).

The first 19 residues, 1 to 19 (MKITNTLLNAAALLAVTEA), serve as a signal peptide directing secretion. The tract at residues 59 to 118 (QLTSKTQDSTSPTTSSVNSLTSSSATSYVETTTPAPSSSTLTTSTISSSTASEDSDATPT) is disordered. Positions 67 to 118 (STSPTTSSVNSLTSSSATSYVETTTPAPSSSTLTTSTISSSTASEDSDATPT) are enriched in low complexity. In terms of domain architecture, SCP spans 128–244 (LKEHNVKRAL…AWRQITVCEY (117 aa)). N-linked (GlcNAc...) asparagine glycosylation occurs at Asn254.

This sequence belongs to the CRISP family.

The protein localises to the secreted. The protein resides in the cell wall. Functionally, cell wall protein involved in cell wall integrity and which plays a role in virulence. The sequence is that of Repressed by EFG1 protein 1 (RBE1) from Candida albicans (strain SC5314 / ATCC MYA-2876) (Yeast).